Here is an 85-residue protein sequence, read N- to C-terminus: HssA/B-like protein 62 (85 aa).

This sequence belongs to the hssA/B family.

This Dictyostelium discoideum (Social amoeba) protein is HssA/B-like protein 62 (hssl62).